The primary structure comprises 282 residues: MLRIAVPNKGALAEAAREILQEAGYRQRRDSRELVLVDPENQVEFFYLRPRDIAVYVGKGTLDVGLTGRDLFRDAQVEGTAEEIMALGFGRSVFRLAAPVGTFSSESELTGRRIATSYDGLLHAYLERTGLDAEVVHLDGAVESSVKLGVADAIADVVETGSTLRAAGMEVFGESILDSEAVLICRAGERPEGLDVLLRRLKGVLVARRWVMIDYDIRRDLLEAATAVTPGLESPTVSPLRDETMVAVRSMVRKPDANRVMDELYALGARGILISAIHAIRL.

It belongs to the ATP phosphoribosyltransferase family. Long subfamily. It depends on Mg(2+) as a cofactor.

It localises to the cytoplasm. The enzyme catalyses 1-(5-phospho-beta-D-ribosyl)-ATP + diphosphate = 5-phospho-alpha-D-ribose 1-diphosphate + ATP. The protein operates within amino-acid biosynthesis; L-histidine biosynthesis; L-histidine from 5-phospho-alpha-D-ribose 1-diphosphate: step 1/9. Its activity is regulated as follows. Feedback inhibited by histidine. Its function is as follows. Catalyzes the condensation of ATP and 5-phosphoribose 1-diphosphate to form N'-(5'-phosphoribosyl)-ATP (PR-ATP). Has a crucial role in the pathway because the rate of histidine biosynthesis seems to be controlled primarily by regulation of HisG enzymatic activity. This chain is ATP phosphoribosyltransferase, found in Micrococcus luteus (strain ATCC 4698 / DSM 20030 / JCM 1464 / CCM 169 / CCUG 5858 / IAM 1056 / NBRC 3333 / NCIMB 9278 / NCTC 2665 / VKM Ac-2230) (Micrococcus lysodeikticus).